Consider the following 612-residue polypeptide: Kelch repeat and BTB domain-containing protein 3 (612 aa).

A BTB domain is found at 52–119; it reads YDFKIIMKDE…AYTGKTKITD (68 aa). Positions 154–254 constitute a BACK domain; the sequence is CLQLLSISDS…QLSEETLQDC (101 aa). Kelch repeat units lie at residues 295–341, 343–403, 404–454, 456–506, and 552–599; these read KYIF…SSYG, KIFL…MALD, RLFV…TCQN, IYVL…KAVP, and KIYI…VIQF.

This is Kelch repeat and BTB domain-containing protein 3 from Homo sapiens (Human).